The primary structure comprises 284 residues: Tropomyosin-1 (284 aa).

Positions 1 to 284 (MDGIKKKMIA…DQTFAELTGY (284 aa)) form a coiled coil. Residues 111 to 131 (TKLEEASKTAEESERGRKDLE) form a disordered region.

The protein belongs to the tropomyosin family. As to quaternary structure, homodimer.

In terms of biological role, tropomyosin, in association with the troponin complex, plays a central role in the calcium dependent regulation of muscle contraction. In Schistosoma mansoni (Blood fluke), this protein is Tropomyosin-1.